The sequence spans 190 residues: Potassium-transporting ATPase KdpC subunit (190 aa).

The chain crosses the membrane as a helical span at residues 10 to 30; it reads TFLFLLLITGGVYPLLTTALG.

This sequence belongs to the KdpC family. As to quaternary structure, the system is composed of three essential subunits: KdpA, KdpB and KdpC.

The protein localises to the cell inner membrane. Functionally, part of the high-affinity ATP-driven potassium transport (or Kdp) system, which catalyzes the hydrolysis of ATP coupled with the electrogenic transport of potassium into the cytoplasm. This subunit acts as a catalytic chaperone that increases the ATP-binding affinity of the ATP-hydrolyzing subunit KdpB by the formation of a transient KdpB/KdpC/ATP ternary complex. This is Potassium-transporting ATPase KdpC subunit from Escherichia coli O45:K1 (strain S88 / ExPEC).